The following is a 510-amino-acid chain: Archaeosine synthase subunit alpha (510 aa).

The region spanning 427 to 510 is the PUA domain; the sequence is LGKFTINKAS…LKKGIAVKVR (84 aa).

It belongs to the archaeosine synthase type 1 family. Forms a robust complex with the archaeosine synthase beta subunit RaSEA, likely an alpha(2)beta(2) heterotetrameric structure. Formation of this complex highly increases lysine transfer activity.

The catalysed reaction is 7-cyano-7-carbaguanosine(15) in tRNA + L-lysine = 7-N-[(5S)-5-amino-5-carboxypentyl]formamidino-7-deazaguanosine(15) in tRNA. The protein operates within tRNA modification; archaeosine-tRNA biosynthesis. Its function is as follows. Functions in the biosynthesis of archaeosine, a modified nucleoside present in the dihydrouridine loop (D-loop) of archaeal tRNAs. Catalyzes the addition of L-lysine to the cyano group of 7-cyano-7-deazaguanine (preQ0)-modified tRNAs at position 15, to generate q0kN15-tRNA, a q0N lysine adduct identified as 7-N-[(5S)-5-amino-5-carboxypentyl]formamidino-7-deazaguanosine. The chain is Archaeosine synthase subunit alpha from Thermoplasma acidophilum (strain ATCC 25905 / DSM 1728 / JCM 9062 / NBRC 15155 / AMRC-C165).